A 167-amino-acid chain; its full sequence is Endoribonuclease YbeY (167 aa).

Zn(2+)-binding residues include His125, His129, and His135.

It belongs to the endoribonuclease YbeY family. The cofactor is Zn(2+).

The protein localises to the cytoplasm. Its function is as follows. Single strand-specific metallo-endoribonuclease involved in late-stage 70S ribosome quality control and in maturation of the 3' terminus of the 16S rRNA. The protein is Endoribonuclease YbeY of Allorhizobium ampelinum (strain ATCC BAA-846 / DSM 112012 / S4) (Agrobacterium vitis (strain S4)).